The sequence spans 325 residues: Methionyl-tRNA formyltransferase (325 aa).

Residue 111–114 (SILP) participates in (6S)-5,6,7,8-tetrahydrofolate binding.

This sequence belongs to the Fmt family.

It carries out the reaction L-methionyl-tRNA(fMet) + (6R)-10-formyltetrahydrofolate = N-formyl-L-methionyl-tRNA(fMet) + (6S)-5,6,7,8-tetrahydrofolate + H(+). In terms of biological role, attaches a formyl group to the free amino group of methionyl-tRNA(fMet). The formyl group appears to play a dual role in the initiator identity of N-formylmethionyl-tRNA by promoting its recognition by IF2 and preventing the misappropriation of this tRNA by the elongation apparatus. In Microcystis aeruginosa (strain NIES-843 / IAM M-2473), this protein is Methionyl-tRNA formyltransferase.